We begin with the raw amino-acid sequence, 633 residues long: Glutamyl-tRNA(Gln) amidotransferase subunit E (633 aa).

Belongs to the GatB/GatE family. GatE subfamily. In terms of assembly, heterodimer of GatD and GatE.

It carries out the reaction L-glutamyl-tRNA(Gln) + L-glutamine + ATP + H2O = L-glutaminyl-tRNA(Gln) + L-glutamate + ADP + phosphate + H(+). In terms of biological role, allows the formation of correctly charged Gln-tRNA(Gln) through the transamidation of misacylated Glu-tRNA(Gln) in organisms which lack glutaminyl-tRNA synthetase. The reaction takes place in the presence of glutamine and ATP through an activated gamma-phospho-Glu-tRNA(Gln). The GatDE system is specific for glutamate and does not act on aspartate. The protein is Glutamyl-tRNA(Gln) amidotransferase subunit E of Methanosarcina barkeri (strain Fusaro / DSM 804).